The following is a 527-amino-acid chain: Cytochrome b5 reductase 4 (527 aa).

The segment at 1-24 (MLNVPSQAFPAAGSQQRVAPAGQS) is disordered. One can recognise a Cytochrome b5 heme-binding domain in the interval 56 to 132 (LIEVTEDELK…LKECLVGRMA (77 aa)). Residues His91 and His114 each contribute to the heme site. The interval 138 to 171 (ALQAHTEKTESTHLNGLSAPPSLRPEPLSAPLPA) is disordered. The 92-residue stretch at 173 to 264 (DHRPRYDWFQ…SVKEKWTQLG (92 aa)) folds into the CS domain. The region spanning 281 to 392 (LFYRECVLLS…GGPEGSFTLR (112 aa)) is the FAD-binding FR-type domain. FAD contacts are provided by residues 372-387 (ANLP…GPEG) and 399-431 (HLYM…KMKL).

The protein belongs to the flavoprotein pyridine nucleotide cytochrome reductase family. FAD is required as a cofactor.

The protein localises to the endoplasmic reticulum. It carries out the reaction 2 Fe(III)-[cytochrome b5] + NADH = 2 Fe(II)-[cytochrome b5] + NAD(+) + H(+). NADH-cytochrome b5 reductase involved in endoplasmic reticulum stress response pathway. This chain is Cytochrome b5 reductase 4 (cyb5r4), found in Danio rerio (Zebrafish).